A 193-amino-acid chain; its full sequence is Imidazoleglycerol-phosphate dehydratase (193 aa).

The protein belongs to the imidazoleglycerol-phosphate dehydratase family.

It localises to the cytoplasm. It catalyses the reaction D-erythro-1-(imidazol-4-yl)glycerol 3-phosphate = 3-(imidazol-4-yl)-2-oxopropyl phosphate + H2O. It functions in the pathway amino-acid biosynthesis; L-histidine biosynthesis; L-histidine from 5-phospho-alpha-D-ribose 1-diphosphate: step 6/9. The polypeptide is Imidazoleglycerol-phosphate dehydratase (Methanoculleus marisnigri (strain ATCC 35101 / DSM 1498 / JR1)).